A 306-amino-acid polypeptide reads, in one-letter code: Pantothenate kinase (306 aa).

Residue 91-98 (GSVAVGKS) coordinates ATP.

The protein belongs to the prokaryotic pantothenate kinase family.

The protein resides in the cytoplasm. The catalysed reaction is (R)-pantothenate + ATP = (R)-4'-phosphopantothenate + ADP + H(+). It functions in the pathway cofactor biosynthesis; coenzyme A biosynthesis; CoA from (R)-pantothenate: step 1/5. In Streptococcus pyogenes serotype M18 (strain MGAS8232), this protein is Pantothenate kinase (coaA).